Reading from the N-terminus, the 267-residue chain is 3-methyl-2-oxobutanoate hydroxymethyltransferase (267 aa).

The Mg(2+) site is built by D46 and D85. 3-methyl-2-oxobutanoate is bound by residues 46 to 47, D85, and K115; that span reads DS. E117 is a Mg(2+) binding site. E184 serves as the catalytic Proton acceptor.

Belongs to the PanB family. As to quaternary structure, homodecamer; pentamer of dimers. Requires Mg(2+) as cofactor.

The protein localises to the cytoplasm. The enzyme catalyses 3-methyl-2-oxobutanoate + (6R)-5,10-methylene-5,6,7,8-tetrahydrofolate + H2O = 2-dehydropantoate + (6S)-5,6,7,8-tetrahydrofolate. It functions in the pathway cofactor biosynthesis; (R)-pantothenate biosynthesis; (R)-pantoate from 3-methyl-2-oxobutanoate: step 1/2. Functionally, catalyzes the reversible reaction in which hydroxymethyl group from 5,10-methylenetetrahydrofolate is transferred onto alpha-ketoisovalerate to form ketopantoate. The protein is 3-methyl-2-oxobutanoate hydroxymethyltransferase of Syntrophotalea carbinolica (strain DSM 2380 / NBRC 103641 / GraBd1) (Pelobacter carbinolicus).